Consider the following 802-residue polypeptide: Phenylalanine--tRNA ligase beta subunit (802 aa).

Residues 38–148 (SKNFERVIVG…SEVPVGTDIS (111 aa)) enclose the tRNA-binding domain. The B5 domain occupies 403 to 478 (VIQKKIFVLK…RVFGYHNIPA (76 aa)). Residues aspartate 456, aspartate 462, and aspartate 466 each contribute to the Mg(2+) site. An FDX-ACB domain is found at 703–796 (SLYPRCSRDI…LQEKFNAILR (94 aa)).

It belongs to the phenylalanyl-tRNA synthetase beta subunit family. Type 1 subfamily. In terms of assembly, tetramer of two alpha and two beta subunits. Mg(2+) serves as cofactor.

The protein localises to the cytoplasm. The catalysed reaction is tRNA(Phe) + L-phenylalanine + ATP = L-phenylalanyl-tRNA(Phe) + AMP + diphosphate + H(+). This is Phenylalanine--tRNA ligase beta subunit from Buchnera aphidicola subsp. Baizongia pistaciae (strain Bp).